Reading from the N-terminus, the 177-residue chain is ATP synthase subunit delta (177 aa).

This sequence belongs to the ATPase delta chain family. F-type ATPases have 2 components, F(1) - the catalytic core - and F(0) - the membrane proton channel. F(1) has five subunits: alpha(3), beta(3), gamma(1), delta(1), epsilon(1). F(0) has three main subunits: a(1), b(2) and c(10-14). The alpha and beta chains form an alternating ring which encloses part of the gamma chain. F(1) is attached to F(0) by a central stalk formed by the gamma and epsilon chains, while a peripheral stalk is formed by the delta and b chains.

The protein resides in the cell inner membrane. F(1)F(0) ATP synthase produces ATP from ADP in the presence of a proton or sodium gradient. F-type ATPases consist of two structural domains, F(1) containing the extramembraneous catalytic core and F(0) containing the membrane proton channel, linked together by a central stalk and a peripheral stalk. During catalysis, ATP synthesis in the catalytic domain of F(1) is coupled via a rotary mechanism of the central stalk subunits to proton translocation. Its function is as follows. This protein is part of the stalk that links CF(0) to CF(1). It either transmits conformational changes from CF(0) to CF(1) or is implicated in proton conduction. This Yersinia pseudotuberculosis serotype O:1b (strain IP 31758) protein is ATP synthase subunit delta.